We begin with the raw amino-acid sequence, 319 residues long: Probable NAD(P)H-dependent D-xylose reductase xyl1 (319 aa).

N26 carries an N-linked (GlcNAc...) asparagine glycan. Catalysis depends on Y50, which acts as the Proton donor. H112 contributes to the substrate binding site. 2 N-linked (GlcNAc...) asparagine glycosylation sites follow: N141 and N167. NAD(+) is bound by residues 166 to 167, 215 to 224, and 271 to 281; these read SN, SSFGPLSFLE, and KSNNPQRLKQN.

This sequence belongs to the aldo/keto reductase family.

The enzyme catalyses xylitol + NAD(+) = D-xylose + NADH + H(+). It catalyses the reaction xylitol + NADP(+) = D-xylose + NADPH + H(+). It participates in carbohydrate metabolism; D-xylose degradation. Its function is as follows. Catalyzes the initial reaction in the xylose utilization pathway by reducing D-xylose into xylitol. Xylose is a major component of hemicelluloses such as xylan. Most fungi utilize D-xylose via three enzymatic reactions, xylose reductase (XR), xylitol dehydrogenase (XDH), and xylulokinase, to form xylulose 5-phosphate, which enters pentose phosphate pathway. The polypeptide is Probable NAD(P)H-dependent D-xylose reductase xyl1 (xyl1) (Aspergillus niger (strain ATCC MYA-4892 / CBS 513.88 / FGSC A1513)).